We begin with the raw amino-acid sequence, 51 residues long: Large ribosomal subunit protein eL39 (51 aa).

Positions 1–22 (MPSQKSFRTKQKLAKAQKQNRP) are disordered.

The protein belongs to the eukaryotic ribosomal protein eL39 family. Interacts with YIH1.

This chain is Large ribosomal subunit protein eL39 (RPL39), found in Debaryomyces hansenii (strain ATCC 36239 / CBS 767 / BCRC 21394 / JCM 1990 / NBRC 0083 / IGC 2968) (Yeast).